The sequence spans 174 residues: 3-hydroxydecanoyl-[acyl-carrier-protein] dehydratase (174 aa).

The active site involves H73.

Belongs to the thioester dehydratase family. FabA subfamily. As to quaternary structure, homodimer.

It localises to the cytoplasm. The catalysed reaction is a (3R)-hydroxyacyl-[ACP] = a (2E)-enoyl-[ACP] + H2O. It carries out the reaction (3R)-hydroxydecanoyl-[ACP] = (2E)-decenoyl-[ACP] + H2O. It catalyses the reaction (2E)-decenoyl-[ACP] = (3Z)-decenoyl-[ACP]. It participates in lipid metabolism; fatty acid biosynthesis. Its function is as follows. Necessary for the introduction of cis unsaturation into fatty acids. Catalyzes the dehydration of (3R)-3-hydroxydecanoyl-ACP to E-(2)-decenoyl-ACP and then its isomerization to Z-(3)-decenoyl-ACP. Can catalyze the dehydratase reaction for beta-hydroxyacyl-ACPs with saturated chain lengths up to 16:0, being most active on intermediate chain length. This chain is 3-hydroxydecanoyl-[acyl-carrier-protein] dehydratase, found in Teredinibacter turnerae (strain ATCC 39867 / T7901).